The sequence spans 164 residues: Transcription antitermination protein NusB (164 aa).

This sequence belongs to the NusB family.

Involved in transcription antitermination. Required for transcription of ribosomal RNA (rRNA) genes. Binds specifically to the boxA antiterminator sequence of the ribosomal RNA (rrn) operons. The polypeptide is Transcription antitermination protein NusB (Mycolicibacterium gilvum (strain PYR-GCK) (Mycobacterium gilvum (strain PYR-GCK))).